Consider the following 174-residue polypeptide: Chorismate pyruvate-lyase (174 aa).

Substrate-binding residues include M36, R78, L116, and E157.

The protein belongs to the UbiC family. As to quaternary structure, monomer.

The protein resides in the cytoplasm. The catalysed reaction is chorismate = 4-hydroxybenzoate + pyruvate. It functions in the pathway cofactor biosynthesis; ubiquinone biosynthesis. Removes the pyruvyl group from chorismate, with concomitant aromatization of the ring, to provide 4-hydroxybenzoate (4HB) for the ubiquinone pathway. The sequence is that of Chorismate pyruvate-lyase from Erwinia tasmaniensis (strain DSM 17950 / CFBP 7177 / CIP 109463 / NCPPB 4357 / Et1/99).